We begin with the raw amino-acid sequence, 591 residues long: Ferric-chelate reductase 1 (591 aa).

Residues 6 to 26 traverse the membrane as a helical segment; it reads FTVSAFILLLHVSFVANYPSG. Residues 13–179 enclose the Reelin domain; the sequence is LLLHVSFVAN…FTTPEATIAP (167 aa). N-linked (GlcNAc...) asparagine glycans are attached at residues Asn-50, Asn-85, Asn-308, Asn-321, and Asn-353. The region spanning 216–331 is the DOMON domain; that stretch reads ERACVLLSFT…ASYYIFVADG (116 aa). The Cytochrome b561 domain maps to 335 to 533; sequence DGRIHKHSQQ…VGTEIILEIH (199 aa). Residues 372-392 form a helical membrane-spanning segment; sequence VHGALMFVAWMTTVSVGVLIA. Residues His-373 and His-413 each coordinate heme b. 2 helical membrane-spanning segments follow: residues 416–436 and 445–465; these read LMLT…IYRG and HPYL…LAAF. Heme b contacts are provided by His-445 and His-481. Transmembrane regions (helical) follow at residues 490 to 510, 514 to 534, and 568 to 588; these read IIAV…LPGP, YAMI…EIHA, and VVLA…LSAI.

It belongs to the FRRS1 family. Heme b is required as a cofactor.

Its subcellular location is the membrane. In terms of biological role, ferric-chelate reductases reduce Fe(3+) to Fe(2+) before its transport from the endosome to the cytoplasm. In Bos taurus (Bovine), this protein is Ferric-chelate reductase 1 (FRRS1).